Consider the following 301-residue polypeptide: Probable alpha-L-glutamate ligase (301 aa).

The ATP-grasp domain maps to 104 to 287 (LQLLSRKGVG…IAGMVIDFIE (184 aa)). ATP-binding positions include Lys141, 178–179 (EY), Asp187, and 211–213 (RSN). 3 residues coordinate Mg(2+): Asp248, Glu260, and Asn262. Asp248, Glu260, and Asn262 together coordinate Mn(2+).

It belongs to the RimK family. The cofactor is Mg(2+). It depends on Mn(2+) as a cofactor.

The polypeptide is Probable alpha-L-glutamate ligase (Pseudoalteromonas translucida (strain TAC 125)).